We begin with the raw amino-acid sequence, 329 residues long: DNA-directed RNA polymerase subunit alpha (329 aa).

The interval 1-234 is alpha N-terminal domain (alpha-NTD); the sequence is MQGSVTEFLK…EQLDAFVELR (234 aa). Residues 248 to 329 are alpha C-terminal domain (alpha-CTD); sequence FDPILLRPVD…WPPASLADDL (82 aa).

This sequence belongs to the RNA polymerase alpha chain family. In terms of assembly, homodimer. The RNAP catalytic core consists of 2 alpha, 1 beta, 1 beta' and 1 omega subunit. When a sigma factor is associated with the core the holoenzyme is formed, which can initiate transcription.

The catalysed reaction is RNA(n) + a ribonucleoside 5'-triphosphate = RNA(n+1) + diphosphate. DNA-dependent RNA polymerase catalyzes the transcription of DNA into RNA using the four ribonucleoside triphosphates as substrates. The sequence is that of DNA-directed RNA polymerase subunit alpha from Shewanella putrefaciens (strain CN-32 / ATCC BAA-453).